Here is a 161-residue protein sequence, read N- to C-terminus: 6,7-dimethyl-8-ribityllumazine synthase (161 aa).

Residues Trp26, 58–60 (AFE), and 81–83 (VVI) contribute to the 5-amino-6-(D-ribitylamino)uracil site. 86–87 (GT) is a (2S)-2-hydroxy-3-oxobutyl phosphate binding site. His89 acts as the Proton donor in catalysis. Phe114 provides a ligand contact to 5-amino-6-(D-ribitylamino)uracil. Residue Arg128 participates in (2S)-2-hydroxy-3-oxobutyl phosphate binding.

It belongs to the DMRL synthase family.

It catalyses the reaction (2S)-2-hydroxy-3-oxobutyl phosphate + 5-amino-6-(D-ribitylamino)uracil = 6,7-dimethyl-8-(1-D-ribityl)lumazine + phosphate + 2 H2O + H(+). It functions in the pathway cofactor biosynthesis; riboflavin biosynthesis; riboflavin from 2-hydroxy-3-oxobutyl phosphate and 5-amino-6-(D-ribitylamino)uracil: step 1/2. Catalyzes the formation of 6,7-dimethyl-8-ribityllumazine by condensation of 5-amino-6-(D-ribitylamino)uracil with 3,4-dihydroxy-2-butanone 4-phosphate. This is the penultimate step in the biosynthesis of riboflavin. The chain is 6,7-dimethyl-8-ribityllumazine synthase from Nocardioides sp. (strain ATCC BAA-499 / JS614).